The following is a 115-amino-acid chain: NADH-ubiquinone oxidoreductase chain 3 (115 aa).

The next 3 membrane-spanning stretches (helical) occupy residues 4–24, 55–75, and 86–106; these read LMALMVNITLSILLITVAFWL, FFLVAITFLLYDLEIALLLPL, and TMMLTAFILVSVLALGLAYEW.

Belongs to the complex I subunit 3 family. As to quaternary structure, core subunit of respiratory chain NADH dehydrogenase (Complex I) which is composed of 45 different subunits. Interacts with TMEM186. Interacts with TMEM242.

Its subcellular location is the mitochondrion inner membrane. The enzyme catalyses a ubiquinone + NADH + 5 H(+)(in) = a ubiquinol + NAD(+) + 4 H(+)(out). Functionally, core subunit of the mitochondrial membrane respiratory chain NADH dehydrogenase (Complex I) which catalyzes electron transfer from NADH through the respiratory chain, using ubiquinone as an electron acceptor. Essential for the catalytic activity of complex I. This Peromyscus gossypinus (Cotton deermouse) protein is NADH-ubiquinone oxidoreductase chain 3.